The primary structure comprises 441 residues: Zinc finger protein ZIC 3 (441 aa).

The segment at 222 to 257 (LSCKWLEESTMNHPQKTCDRTFSSMHELVTHMTMEH) adopts a C2H2-type 1; atypical zinc-finger fold. The segment at 266 to 293 (HICYWEECPRGGKSFKAKYKLVNHIRVH) adopts a C2H2-type 2; atypical zinc-finger fold. 3 consecutive C2H2-type zinc fingers follow at residues 299–323 (FPCPFPGCGKIFARSENLKIHKRTH), 329–353 (FKCEFEGCDRRFANSSDRKKHMHVH), and 359–381 (YICKVCDKSYTHPSSLRKHMKVH). The segment at 375-441 (RKHMKVHESQ…LPPNFNEWYV (67 aa)) is disordered. Residues 383–399 (SQGSDSSPAASSGYESA) show a composition bias toward low complexity. Positions 406-429 (SANSEEPSKNSSATHQTNNNSHNT) are enriched in polar residues.

It belongs to the GLI C2H2-type zinc-finger protein family. First detected at early gastrula (stage 10.25) in the dorsal lip and prospective neural plate. Also expressed in the mesoderm at early gastrulation, with expression strongest on the dorsal side. Mesodermal expression continues at stage 12 but is hardly detectable after stage 14. As gastrulation proceeds, expression decreases in the dorsal lip and increases in the prospective neural plate. At the neural plate stage (stage 14), expressed strongly in the prospective mesencephalon and anterior rhombencephalon, after which expression becomes stronger in the anterior neural folds. At early tailbud stage (stage 20), expression becomes restricted to the dorsal region of forebrain, midbrain and hindbrain, and weakly to the dorsal trunk. After mid-tailbud stage, expression decreases in the diencephalon, appears in the lateral mesoderm of the tailbud region and becomes restricted in the dorsal part of the neural tube.

Its subcellular location is the nucleus. The protein localises to the cytoplasm. Probably acts as a transcriptional activator. May bind to the minimal GLI-consensus sequence 5'-GGGTGGTC-3'. Can determine the ectodermal cell fate and promote the earliest step of neural and neural crest development. Involved in establishing left-right asymmetry in the embryo. The protein is Zinc finger protein ZIC 3 (zic3) of Xenopus laevis (African clawed frog).